The primary structure comprises 350 residues: Protein RecA (350 aa).

G67–T74 is an ATP binding site.

Belongs to the RecA family.

The protein resides in the cytoplasm. In terms of biological role, can catalyze the hydrolysis of ATP in the presence of single-stranded DNA, the ATP-dependent uptake of single-stranded DNA by duplex DNA, and the ATP-dependent hybridization of homologous single-stranded DNAs. It interacts with LexA causing its activation and leading to its autocatalytic cleavage. The chain is Protein RecA from Chlamydia felis (strain Fe/C-56) (Chlamydophila felis).